We begin with the raw amino-acid sequence, 64 residues long: Small, acid-soluble spore protein beta (64 aa).

Belongs to the alpha/beta-type SASP family.

Functionally, SASP are bound to spore DNA. They are double-stranded DNA-binding proteins that cause DNA to change to an a-like conformation. They protect the DNA backbone from chemical and enzymatic cleavage and are thus involved in dormant spore's high resistance to UV light. This chain is Small, acid-soluble spore protein beta, found in Paraclostridium bifermentans (Clostridium bifermentans).